A 458-amino-acid polypeptide reads, in one-letter code: tRNA modification GTPase MnmE (458 aa).

3 residues coordinate (6S)-5-formyl-5,6,7,8-tetrahydrofolate: arginine 22, glutamate 84, and arginine 123. Positions 220 to 379 (GIATAIIGRP…LEKAIADLFF (160 aa)) constitute a TrmE-type G domain. Position 230 (asparagine 230) interacts with K(+). Residues 230-235 (NVGKSS), 249-255 (TDIAGTT), and 274-277 (DTAG) each bind GTP. Residue serine 234 coordinates Mg(2+). K(+) contacts are provided by threonine 249, isoleucine 251, and threonine 254. Threonine 255 is a binding site for Mg(2+). A (6S)-5-formyl-5,6,7,8-tetrahydrofolate-binding site is contributed by lysine 458.

This sequence belongs to the TRAFAC class TrmE-Era-EngA-EngB-Septin-like GTPase superfamily. TrmE GTPase family. As to quaternary structure, homodimer. Heterotetramer of two MnmE and two MnmG subunits. K(+) is required as a cofactor.

It is found in the cytoplasm. Functionally, exhibits a very high intrinsic GTPase hydrolysis rate. Involved in the addition of a carboxymethylaminomethyl (cmnm) group at the wobble position (U34) of certain tRNAs, forming tRNA-cmnm(5)s(2)U34. This is tRNA modification GTPase MnmE from Bacillus anthracis.